Reading from the N-terminus, the 815-residue chain is Protein-glutamine gamma-glutamyltransferase K (815 aa).

2 disordered regions span residues 1 to 40 and 59 to 100; these read MDGP…RRGG and DDWG…AAGD. Residues 16-25 show a composition bias toward pro residues; sequence WQPPTTPSPE. Residue threonine 21 is modified to Phosphothreonine. Phosphoserine is present on residues serine 23, serine 80, serine 83, serine 90, and serine 93. Over residues 59 to 87 the composition is skewed to basic and acidic residues; that stretch reads DDWGPEPHRDRGSGSGRRRPDSRGSDSRR. Catalysis depends on residues cysteine 375, histidine 434, and aspartate 457. The Ca(2+) site is built by asparagine 497, aspartate 499, glutamate 546, and glutamate 551. The segment at 795 to 815 is disordered; that stretch reads SNAGGNSPLGETIPMASRGGA.

Belongs to the transglutaminase superfamily. Transglutaminase family. Interacts with PLAAT4. The cofactor is Ca(2+). Palmitoylated. In terms of processing, the membrane anchorage region possesses a cluster of five cysteines within which fatty acid(s) may become thioester-linked. It is subject to phorbol ester-stimulated phosphorylation and is hypersensitive to proteolysis, which releases the enzyme in a soluble form. Post-translationally, tyrosine-phosphorylated.

It localises to the membrane. It catalyses the reaction L-glutaminyl-[protein] + L-lysyl-[protein] = [protein]-L-lysyl-N(6)-5-L-glutamyl-[protein] + NH4(+). In terms of biological role, catalyzes the cross-linking of proteins and the conjugation of polyamines to proteins. Responsible for cross-linking epidermal proteins during formation of the stratum corneum. Involved in cell proliferation. The chain is Protein-glutamine gamma-glutamyltransferase K (TGM1) from Canis lupus familiaris (Dog).